The primary structure comprises 295 residues: Probable endonuclease 4 (295 aa).

Positions 78, 118, 154, 188, 191, 225, 238, 240, and 270 each coordinate Zn(2+).

Belongs to the AP endonuclease 2 family. Zn(2+) serves as cofactor.

The catalysed reaction is Endonucleolytic cleavage to 5'-phosphooligonucleotide end-products.. In terms of biological role, endonuclease IV plays a role in DNA repair. It cleaves phosphodiester bonds at apurinic or apyrimidinic (AP) sites, generating a 3'-hydroxyl group and a 5'-terminal sugar phosphate. This is Probable endonuclease 4 from Vibrio campbellii (strain ATCC BAA-1116).